A 388-amino-acid chain; its full sequence is Succinate--CoA ligase [ADP-forming] subunit beta (388 aa).

One can recognise an ATP-grasp domain in the interval 9 to 236; sequence KKLFAEHGVP…VAAVDPLEQK (228 aa). ATP-binding positions include Lys-45, 52 to 54, Glu-91, Ser-94, and Glu-99; that span reads GRG. Mg(2+) contacts are provided by Asn-191 and Asp-205. Substrate contacts are provided by residues Asn-256 and 318–320; that span reads GIT.

The protein belongs to the succinate/malate CoA ligase beta subunit family. As to quaternary structure, heterotetramer of two alpha and two beta subunits. The cofactor is Mg(2+).

The enzyme catalyses succinate + ATP + CoA = succinyl-CoA + ADP + phosphate. It catalyses the reaction GTP + succinate + CoA = succinyl-CoA + GDP + phosphate. It functions in the pathway carbohydrate metabolism; tricarboxylic acid cycle; succinate from succinyl-CoA (ligase route): step 1/1. Its function is as follows. Succinyl-CoA synthetase functions in the citric acid cycle (TCA), coupling the hydrolysis of succinyl-CoA to the synthesis of either ATP or GTP and thus represents the only step of substrate-level phosphorylation in the TCA. The beta subunit provides nucleotide specificity of the enzyme and binds the substrate succinate, while the binding sites for coenzyme A and phosphate are found in the alpha subunit. This is Succinate--CoA ligase [ADP-forming] subunit beta from Parafrankia sp. (strain EAN1pec).